The chain runs to 66 residues: Large ribosomal subunit protein uL29 (66 aa).

It belongs to the universal ribosomal protein uL29 family.

This chain is Large ribosomal subunit protein uL29, found in Francisella tularensis subsp. holarctica (strain LVS).